Consider the following 284-residue polypeptide: Plastid-lipid-associated protein 6, chloroplastic (284 aa).

The segment covering 1 to 11 (MATSSTFSSLL) has biased composition (low complexity). A disordered region spans residues 1-47 (MATSSTFSSLLPSPPALLSDHRSPPPSIRYSFSPLTTPKSSRLGFTV). The transit peptide at 1-72 (MATSSTFSSL…SIGGESDPPP (72 aa)) directs the protein to the chloroplast. Phosphoserine is present on residues Ser96, Ser105, Ser148, Ser151, and Ser155.

Belongs to the PAP/fibrillin family. As to quaternary structure, part of the Photosystem II light-harvesting complex (LHCII). Phosphorylated as part of a basal defense response.

The protein resides in the plastid. Its subcellular location is the chloroplast. It is found in the plastoglobule. Its function is as follows. Required for plastoglobule development and resistance to multiple stresses. Regulates plastoglobule osmiophilic content. May be involved in the transport of lipophilic antioxidants in and out of the plastoglobule. This is Plastid-lipid-associated protein 6, chloroplastic from Arabidopsis thaliana (Mouse-ear cress).